The primary structure comprises 263 residues: Indole-3-glycerol phosphate synthase (263 aa).

This sequence belongs to the TrpC family.

It carries out the reaction 1-(2-carboxyphenylamino)-1-deoxy-D-ribulose 5-phosphate + H(+) = (1S,2R)-1-C-(indol-3-yl)glycerol 3-phosphate + CO2 + H2O. It participates in amino-acid biosynthesis; L-tryptophan biosynthesis; L-tryptophan from chorismate: step 4/5. In Desulfosudis oleivorans (strain DSM 6200 / JCM 39069 / Hxd3) (Desulfococcus oleovorans), this protein is Indole-3-glycerol phosphate synthase.